Consider the following 298-residue polypeptide: tRNA-cytidine(32) 2-sulfurtransferase (298 aa).

Residues 48-53 carry the PP-loop motif motif; the sequence is SGGKDS. Residues cysteine 123, cysteine 126, and cysteine 214 each contribute to the [4Fe-4S] cluster site.

It belongs to the TtcA family. As to quaternary structure, homodimer. Mg(2+) is required as a cofactor. [4Fe-4S] cluster serves as cofactor.

The protein localises to the cytoplasm. It carries out the reaction cytidine(32) in tRNA + S-sulfanyl-L-cysteinyl-[cysteine desulfurase] + AH2 + ATP = 2-thiocytidine(32) in tRNA + L-cysteinyl-[cysteine desulfurase] + A + AMP + diphosphate + H(+). It participates in tRNA modification. Its function is as follows. Catalyzes the ATP-dependent 2-thiolation of cytidine in position 32 of tRNA, to form 2-thiocytidine (s(2)C32). The sulfur atoms are provided by the cysteine/cysteine desulfurase (IscS) system. This chain is tRNA-cytidine(32) 2-sulfurtransferase, found in Nitrosospira multiformis (strain ATCC 25196 / NCIMB 11849 / C 71).